Reading from the N-terminus, the 413-residue chain is MAKEKEHMNLAFIGHVDHGKSTLVGHLLLQAGAIAEQQLAEGEDKFRFVMDRLSEERERGVTIDLAHAKFETDKYEFTIVDCPGHRDFVKNMITGASQADAAVLVVAVDDGVMPQTKEHVFLSRTLGINQLIVAINKMDLVNYDEEKFNALKDEVAALIKTVGYKPSDVEFIPLSAFEGDNITSKSENTPWYKGKTLVEALDDLEAPEKPVDLPLRIPIQDVYSITGVGTVPVGRVETGVLKKGENVIFEPAGVSGEVKSIEMHHEMIEQAEPGDNIGFNVRGVGKNDIRRGDVAGHLDNPPKVAKEFTAQIVVLQHPGVITVGYTPVFHCHTAQVACTFLELVQKMNPATGQVEEENPDFLKTGNAAVVKVKPTKPLVIEKIKDIPHMGRFAIRDMGQTVAAGMCIDLVPAK.

The tr-type G domain maps to K5–V211. The interval G14–S21 is G1. GTP is bound at residue G14 to S21. S21 serves as a coordination point for Mg(2+). Residues G60–D64 are G2. Residues D81–G84 form a G3 region. GTP is bound by residues D81–H85 and N136–D139. The interval N136–D139 is G4. A G5 region spans residues S175–F177.

Belongs to the TRAFAC class translation factor GTPase superfamily. Classic translation factor GTPase family. EF-Tu/EF-1A subfamily.

It is found in the cytoplasm. The enzyme catalyses GTP + H2O = GDP + phosphate + H(+). Functionally, GTP hydrolase that promotes the GTP-dependent binding of aminoacyl-tRNA to the A-site of ribosomes during protein biosynthesis. The sequence is that of Elongation factor 1-alpha from Methanothermobacter thermautotrophicus (strain ATCC 29096 / DSM 1053 / JCM 10044 / NBRC 100330 / Delta H) (Methanobacterium thermoautotrophicum).